The chain runs to 509 residues: Methylthioalkylmalate synthase 1-1, chloroplastic (509 aa).

The N-terminal 55 residues, 1 to 55 (MSFSPTYSIVMASPLLTSSQMIPTTGSTVGFRSILPFGSLRLTRPYKKTSLFISY), are a transit peptide targeting the chloroplast. A Pyruvate carboxyltransferase domain is found at 91–365 (VRVYDTTLRD…YTRIDTRQIM (275 aa)). Aspartate 100, histidine 298, and histidine 300 together coordinate Mn(2+).

Belongs to the alpha-IPM synthase/homocitrate synthase family. In terms of assembly, monomer. It depends on Mn(2+) as a cofactor. Requires Co(2+) as cofactor.

It localises to the plastid. The protein localises to the chloroplast. The enzyme catalyses 4-methylsulfanyl-2-oxobutanoate + acetyl-CoA + H2O = 2-(2-methylsulfanyl)ethylmalate + CoA + H(+). It participates in secondary metabolite biosynthesis. Its activity is regulated as follows. Inhibited by EDTA, Cu(2+) and Zn(2+). Its function is as follows. Determines the side chain length of aliphatic glucosinolate structures. Involved in the biosynthesis of glucosinolate derivative natural products such as 6-(methylsulfinyl)hexylisothiocyanate (6-MSITC), a compound found in wasabi with diverse health-promoting properties. Catalyzes the conversion of 4-methylsulfanyl-2-oxobutanoate (4-MTOB) into 2-(2-methylsulfanyl)ethylmalate (2-(2-MT)EM). The polypeptide is Methylthioalkylmalate synthase 1-1, chloroplastic (Eutrema japonicum (Wasabi plant)).